The primary structure comprises 215 residues: Large ribosomal subunit protein bL25 (215 aa).

Residues 190-215 (VLTDAEEETDETPEEPEAIRQKGDEE) are disordered. Acidic residues predominate over residues 193-205 (DAEEETDETPEEP). The segment covering 206–215 (EAIRQKGDEE) has biased composition (basic and acidic residues).

It belongs to the bacterial ribosomal protein bL25 family. CTC subfamily. In terms of assembly, part of the 50S ribosomal subunit; part of the 5S rRNA/L5/L18/L25 subcomplex. Contacts the 5S rRNA. Binds to the 5S rRNA independently of L5 and L18.

Its function is as follows. This is one of the proteins that binds to the 5S RNA in the ribosome where it forms part of the central protuberance. This Maricaulis maris (strain MCS10) (Caulobacter maris) protein is Large ribosomal subunit protein bL25.